The primary structure comprises 966 residues: Isoleucine--tRNA ligase (966 aa).

The segment covering 1–16 (MSDDKRAKSDKNEKNK) has biased composition (basic and acidic residues). The disordered stretch occupies residues 1 to 24 (MSDDKRAKSDKNEKNKYPVNLLDT). The 'HIGH' region signature appears at 69-79 (PYANGDIHIGH). Residue E599 coordinates L-isoleucyl-5'-AMP. The short motif at 640-644 (KMSKS) is the 'KMSKS' region element. K643 is a binding site for ATP. Residues C929, C932, C949, and C952 each contribute to the Zn(2+) site.

The protein belongs to the class-I aminoacyl-tRNA synthetase family. IleS type 1 subfamily. Monomer. Zn(2+) serves as cofactor.

The protein resides in the cytoplasm. The catalysed reaction is tRNA(Ile) + L-isoleucine + ATP = L-isoleucyl-tRNA(Ile) + AMP + diphosphate. Its function is as follows. Catalyzes the attachment of isoleucine to tRNA(Ile). As IleRS can inadvertently accommodate and process structurally similar amino acids such as valine, to avoid such errors it has two additional distinct tRNA(Ile)-dependent editing activities. One activity is designated as 'pretransfer' editing and involves the hydrolysis of activated Val-AMP. The other activity is designated 'posttransfer' editing and involves deacylation of mischarged Val-tRNA(Ile). The chain is Isoleucine--tRNA ligase from Cupriavidus taiwanensis (strain DSM 17343 / BCRC 17206 / CCUG 44338 / CIP 107171 / LMG 19424 / R1) (Ralstonia taiwanensis (strain LMG 19424)).